A 437-amino-acid polypeptide reads, in one-letter code: Serine hydroxymethyltransferase (437 aa).

(6S)-5,6,7,8-tetrahydrofolate contacts are provided by residues L130 and 134 to 136 (GHL). K239 is subject to N6-(pyridoxal phosphate)lysine.

This sequence belongs to the SHMT family. Homodimer. Requires pyridoxal 5'-phosphate as cofactor.

The protein resides in the cytoplasm. The enzyme catalyses (6R)-5,10-methylene-5,6,7,8-tetrahydrofolate + glycine + H2O = (6S)-5,6,7,8-tetrahydrofolate + L-serine. It participates in one-carbon metabolism; tetrahydrofolate interconversion. The protein operates within amino-acid biosynthesis; glycine biosynthesis; glycine from L-serine: step 1/1. Its function is as follows. Catalyzes the reversible interconversion of serine and glycine with tetrahydrofolate (THF) serving as the one-carbon carrier. This reaction serves as the major source of one-carbon groups required for the biosynthesis of purines, thymidylate, methionine, and other important biomolecules. Also exhibits THF-independent aldolase activity toward beta-hydroxyamino acids, producing glycine and aldehydes, via a retro-aldol mechanism. The protein is Serine hydroxymethyltransferase of Bartonella tribocorum (strain CIP 105476 / IBS 506).